We begin with the raw amino-acid sequence, 620 residues long: Transcription factor kayak (620 aa).

2 disordered regions span residues 1 to 36 (MKVK…SNGV) and 184 to 288 (SDTD…EKRR). Polar residues predominate over residues 184 to 194 (SDTDDSNASWN). Composition is skewed to low complexity over residues 201–233 (GDTT…GANN) and 249–266 (ANNN…PAAR). In terms of domain architecture, bZIP spans 284 to 347 (EEKRRIRRER…NQLKYVIEAH (64 aa)). Positions 286-305 (KRRIRRERNKAAAARCRKRR) are basic motif. The tract at residues 312–340 (LTEEVDALVKKGDTLKAEITTLTELRNQL) is leucine-zipper. The interval 375–414 (STGGSSCGSVHSNHSHNNNNNNNNSNDSSSGTITGFDATL) is disordered. A compositionally biased stretch (low complexity) spans 377–405 (GGSSCGSVHSNHSHNNNNNNNNSNDSSSG). Ser-422 carries the phosphoserine modification. Disordered regions lie at residues 447–466 (GLDS…AKRA) and 590–620 (SGPL…LCPL).

This sequence belongs to the bZIP family. Fos subfamily. In terms of assembly, homodimer. Heterodimer with Jra. The kay-Jra heterodimer binds more stably to the AP-1 site than either of the two proteins alone.

Its subcellular location is the nucleus. Developmentally regulated transcription factor AP-1 binds and recognizes the enhancer DNA sequence: 5'-TGA[CG]TCA-3'. May play a role in the function or determination of a particular subset of cells in the developing embryo. It is able to carry out its function either independently of or in conjunction with Jra. This chain is Transcription factor kayak, found in Drosophila willistoni (Fruit fly).